Reading from the N-terminus, the 531-residue chain is Putative heme-binding protein HQ_1094A (531 aa).

His-177 contributes to the heme binding site. Residues 269 to 340 form a disordered region; that stretch reads AHGEAHGHAH…STNTNTQDSE (72 aa). Residues 271 to 281 show a composition bias toward basic and acidic residues; sequence GEAHGHAHGDS. The segment covering 284–306 has biased composition (gly residues); sequence GSGGGGGSSHGQSPGGASAGGSA. The span at 308–317 shows a compositional bias: basic and acidic residues; the sequence is GTEDADHSDS. Residues 318 to 338 are compositionally biased toward low complexity; it reads RSTTSADTTQSDTSTNTNTQD. The region spanning 441 to 529 is the ABM domain; that stretch reads GTMGMFYTVK…VLSERPRHVF (89 aa).

It in the N-terminal section; belongs to the ChdC family.

This chain is Putative heme-binding protein HQ_1094A, found in Haloquadratum walsbyi (strain DSM 16790 / HBSQ001).